We begin with the raw amino-acid sequence, 198 residues long: Protein GrpE (198 aa).

Belongs to the GrpE family. Homodimer.

It localises to the cytoplasm. In terms of biological role, participates actively in the response to hyperosmotic and heat shock by preventing the aggregation of stress-denatured proteins, in association with DnaK and GrpE. It is the nucleotide exchange factor for DnaK and may function as a thermosensor. Unfolded proteins bind initially to DnaJ; upon interaction with the DnaJ-bound protein, DnaK hydrolyzes its bound ATP, resulting in the formation of a stable complex. GrpE releases ADP from DnaK; ATP binding to DnaK triggers the release of the substrate protein, thus completing the reaction cycle. Several rounds of ATP-dependent interactions between DnaJ, DnaK and GrpE are required for fully efficient folding. The polypeptide is Protein GrpE (Actinobacillus pleuropneumoniae serotype 3 (strain JL03)).